A 427-amino-acid chain; its full sequence is Gamma-glutamyl phosphate reductase (427 aa).

The protein belongs to the gamma-glutamyl phosphate reductase family.

The protein localises to the cytoplasm. The enzyme catalyses L-glutamate 5-semialdehyde + phosphate + NADP(+) = L-glutamyl 5-phosphate + NADPH + H(+). It participates in amino-acid biosynthesis; L-proline biosynthesis; L-glutamate 5-semialdehyde from L-glutamate: step 2/2. Its function is as follows. Catalyzes the NADPH-dependent reduction of L-glutamate 5-phosphate into L-glutamate 5-semialdehyde and phosphate. The product spontaneously undergoes cyclization to form 1-pyrroline-5-carboxylate. The polypeptide is Gamma-glutamyl phosphate reductase (Brucella canis (strain ATCC 23365 / NCTC 10854 / RM-666)).